The following is a 520-amino-acid chain: Amine oxidase [flavin-containing] B (520 aa).

At Ser-2 the chain carries N-acetylserine. Over 2-489 (SNKCDVIVVG…TFLERHLPSV (488 aa)) the chain is Cytoplasmic. Lys-52 is subject to N6-acetyllysine. Residue Cys-397 is modified to S-8alpha-FAD cysteine. The helical; Anchor for type IV membrane protein transmembrane segment at 490–516 (PGLLKLLGLTTILSATALGFLAHKKGL) threads the bilayer. Residues 517-520 (FVRF) are Mitochondrial intermembrane-facing.

It belongs to the flavin monoamine oxidase family. Monomer, homo- or heterodimer (containing two subunits of similar size). Each subunit contains a covalently bound flavin. Enzymatically active as monomer. Requires FAD as cofactor.

The protein localises to the mitochondrion outer membrane. It carries out the reaction a secondary aliphatic amine + O2 + H2O = a primary amine + an aldehyde + H2O2. It catalyses the reaction (R)-adrenaline + O2 + H2O = (R)-3,4-dihydroxymandelaldehyde + methylamine + H2O2. The catalysed reaction is a primary methyl amine + O2 + H2O = an aldehyde + H2O2 + NH4(+). The enzyme catalyses dopamine + O2 + H2O = 3,4-dihydroxyphenylacetaldehyde + H2O2 + NH4(+). It carries out the reaction tyramine + O2 + H2O = (4-hydroxyphenyl)acetaldehyde + H2O2 + NH4(+). It catalyses the reaction (R)-noradrenaline + O2 + H2O = (R)-3,4-dihydroxymandelaldehyde + H2O2 + NH4(+). The catalysed reaction is benzylamine + O2 + H2O = benzaldehyde + H2O2 + NH4(+). The enzyme catalyses 2-phenylethylamine + O2 + H2O = 2-phenylacetaldehyde + H2O2 + NH4(+). It carries out the reaction N-acetylputrescine + O2 + H2O = 4-acetamidobutanal + H2O2 + NH4(+). Catalyzes the oxidative deamination of primary and some secondary amines such as neurotransmitters, and exogenous amines including the tertiary amine, neurotoxin 1-methyl-4-phenyl-1,2,3,6-tetrahydropyridine (MPTP), with concomitant reduction of oxygen to hydrogen peroxide and participates in the metabolism of neuroactive and vasoactive amines in the central nervous system and peripheral tissues. Preferentially degrades benzylamine and phenylethylamine. This Rattus norvegicus (Rat) protein is Amine oxidase [flavin-containing] B.